We begin with the raw amino-acid sequence, 190 residues long: dTTP/UTP pyrophosphatase (190 aa).

The Proton acceptor role is filled by aspartate 70.

The protein belongs to the Maf family. YhdE subfamily. A divalent metal cation is required as a cofactor.

It localises to the cytoplasm. The enzyme catalyses dTTP + H2O = dTMP + diphosphate + H(+). It catalyses the reaction UTP + H2O = UMP + diphosphate + H(+). Nucleoside triphosphate pyrophosphatase that hydrolyzes dTTP and UTP. May have a dual role in cell division arrest and in preventing the incorporation of modified nucleotides into cellular nucleic acids. In Paramagnetospirillum magneticum (strain ATCC 700264 / AMB-1) (Magnetospirillum magneticum), this protein is dTTP/UTP pyrophosphatase.